Here is a 237-residue protein sequence, read N- to C-terminus: Ribosomal RNA small subunit methyltransferase G (237 aa).

Residues glycine 78, phenylalanine 83, 129–130, and arginine 148 each bind S-adenosyl-L-methionine; that span reads AE.

This sequence belongs to the methyltransferase superfamily. RNA methyltransferase RsmG family.

The protein localises to the cytoplasm. Its function is as follows. Specifically methylates the N7 position of a guanine in 16S rRNA. This is Ribosomal RNA small subunit methyltransferase G from Streptococcus thermophilus (strain ATCC BAA-491 / LMD-9).